A 208-amino-acid chain; its full sequence is Probable GTP-binding protein EngB (208 aa).

One can recognise an EngB-type G domain in the interval 22 to 195 (GLPEIALAGR…WHSIEEIFIA (174 aa)). Residues 30–37 (GRSNVGKS), 57–61 (GKTRT), 75–78 (DLPG), 142–145 (TKSD), and 174–176 (ISS) contribute to the GTP site. Mg(2+) contacts are provided by Ser37 and Thr59.

Belongs to the TRAFAC class TrmE-Era-EngA-EngB-Septin-like GTPase superfamily. EngB GTPase family. The cofactor is Mg(2+).

In terms of biological role, necessary for normal cell division and for the maintenance of normal septation. The protein is Probable GTP-binding protein EngB of Alkaliphilus oremlandii (strain OhILAs) (Clostridium oremlandii (strain OhILAs)).